The following is a 273-amino-acid chain: uncharacterized protein (273 aa).

Residues 7–25 traverse the membrane as a helical segment; the sequence is FFRWAFLIATVYVAYYFLV. Disordered stretches follow at residues 34-154 and 168-273; these read KPQK…LKMK and LHNS…DSLW. Positions 36-54 are enriched in basic residues; sequence QKSKLTKLGKQKQRQKQKN. Residues 55-91 show a composition bias toward basic and acidic residues; that stretch reads TKKDTLVNRETPSKKSQKLETSDALKSKSKDSSKKEP. Positions 92 to 101 are enriched in low complexity; it reads VVVPKKGTPK. Residues 115–144 show a composition bias toward basic and acidic residues; it reads PKKEKLVGKNPAEKEDTTDVEDTQKLEQKH. Polar residues predominate over residues 145-154; the sequence is STTPSSLKMK. Residues 201–212 are compositionally biased toward basic residues; that stretch reads KRQRQNQQKKLR. Basic and acidic residues predominate over residues 213–240; it reads AKEMQELADEEQRRRLAAHRKELHEANR. Residues 245 to 266 show a composition bias toward polar residues; sequence LNNSSRSAYSYINNGQAGSSKG.

It localises to the cytoplasm. The protein localises to the membrane. This is an uncharacterized protein from Schizosaccharomyces pombe (strain 972 / ATCC 24843) (Fission yeast).